The following is a 478-amino-acid chain: Methionine aminopeptidase 2-1 (478 aa).

The segment at 1 to 124 is disordered; sequence MGSKSPEGHN…PRVPLSTLFP (124 aa). The segment covering 46–56 has biased composition (acidic residues); the sequence is NDDDDADDDEK. Positions 92 to 104 are enriched in basic residues; that stretch reads KKKKKRKRSKKKA. A substrate-binding site is contributed by His-230. A divalent metal cation-binding residues include Asp-251, Asp-262, and His-331. His-339 is a substrate binding site. A divalent metal cation contacts are provided by Glu-364 and Glu-459.

Belongs to the peptidase M24A family. Methionine aminopeptidase eukaryotic type 2 subfamily. Co(2+) serves as cofactor. Zn(2+) is required as a cofactor. It depends on Mn(2+) as a cofactor. Requires Fe(2+) as cofactor.

Its subcellular location is the cytoplasm. The catalysed reaction is Release of N-terminal amino acids, preferentially methionine, from peptides and arylamides.. Functionally, cotranslationally removes the N-terminal methionine from nascent proteins. The N-terminal methionine is often cleaved when the second residue in the primary sequence is small and uncharged (Met-Ala-, Cys, Gly, Pro, Ser, Thr, or Val). The polypeptide is Methionine aminopeptidase 2-1 (Aspergillus clavatus (strain ATCC 1007 / CBS 513.65 / DSM 816 / NCTC 3887 / NRRL 1 / QM 1276 / 107)).